Here is a 732-residue protein sequence, read N- to C-terminus: Translation initiation factor eIF2B subunit epsilon (732 aa).

Residues 559–726 (GEEEEDFGVE…QEADEEDSDE (168 aa)) enclose the W2 domain.

The protein belongs to the eIF-2B gamma/epsilon subunits family. As to quaternary structure, component of the translation initiation factor 2B (eIF2B) complex which is a heterodecamer of two sets of five different subunits: alpha, beta, gamma, delta and epsilon. Subunits alpha, beta and delta comprise a regulatory subcomplex and subunits epsilon and gamma comprise a catalytic subcomplex. Within the complex, the hexameric regulatory complex resides at the center, with the two heterodimeric catalytic subcomplexes bound on opposite sides.

It localises to the cytoplasm. It is found in the cytosol. Acts as a component of the translation initiation factor 2B (eIF2B) complex, which catalyzes the exchange of GDP for GTP on the eukaryotic initiation factor 2 (eIF2) complex gamma subunit. Its guanine nucleotide exchange factor activity is repressed when bound to eIF2 complex phosphorylated on the alpha subunit, thereby limiting the amount of methionyl-initiator methionine tRNA available to the ribosome and consequently global translation is repressed. This chain is Translation initiation factor eIF2B subunit epsilon (GCD6), found in Candida albicans (strain SC5314 / ATCC MYA-2876) (Yeast).